Reading from the N-terminus, the 103-residue chain is Co-chaperonin GroES (103 aa).

This sequence belongs to the GroES chaperonin family. In terms of assembly, heptamer of 7 subunits arranged in a ring. Interacts with the chaperonin GroEL.

The protein localises to the cytoplasm. Functionally, together with the chaperonin GroEL, plays an essential role in assisting protein folding. The GroEL-GroES system forms a nano-cage that allows encapsulation of the non-native substrate proteins and provides a physical environment optimized to promote and accelerate protein folding. GroES binds to the apical surface of the GroEL ring, thereby capping the opening of the GroEL channel. In Synechocystis sp. (strain ATCC 27184 / PCC 6803 / Kazusa), this protein is Co-chaperonin GroES.